A 162-amino-acid polypeptide reads, in one-letter code: Corticoliberin-2 (162 aa).

Residues 1 to 24 (MRLNFLVTTMALLVAFPPPYECRA) form the signal peptide. A propeptide spanning residues 25 to 119 (IDSSSNQPVT…ALDSEERERR (95 aa)) is cleaved from the precursor. A disordered region spans residues 57 to 79 (LGNRNKNSPRSPPDTYPEASQYS). F160 carries the phenylalanine amide modification.

It belongs to the sauvagine/corticotropin-releasing factor/urotensin I family.

It is found in the secreted. Its function is as follows. This hormone from hypothalamus regulates the release of corticotropin from pituitary gland. This is Corticoliberin-2 (crf2) from Catostomus commersonii (White sucker).